We begin with the raw amino-acid sequence, 124 residues long: Small ribosomal subunit protein bS6m (124 aa).

The protein belongs to the bacterial ribosomal protein bS6 family. Component of the mitochondrial ribosome small subunit (28S) which comprises a 12S rRNA and about 30 distinct proteins.

It is found in the mitochondrion. This chain is Small ribosomal subunit protein bS6m (MRPS6), found in Bos taurus (Bovine).